Here is a 497-residue protein sequence, read N- to C-terminus: Pancreatic alpha-amylase (497 aa).

Residue Q1 is modified to Pyrrolidone carboxylic acid. 3 cysteine pairs are disulfide-bonded: C28–C86, C70–C115, and C141–C160. 3 residues coordinate Ca(2+): N100, R158, and D167. R195 contacts chloride. The active-site Nucleophile is the D197. Residue H201 coordinates Ca(2+). The active-site Proton donor is the E233. Chloride is bound by residues N298 and R337. Intrachain disulfides connect C379/C385 and C451/C463.

Belongs to the glycosyl hydrolase 13 family. As to quaternary structure, monomer. Ca(2+) is required as a cofactor. Chloride serves as cofactor.

It localises to the secreted. It is found in the extracellular space. It carries out the reaction Endohydrolysis of (1-&gt;4)-alpha-D-glucosidic linkages in polysaccharides containing three or more (1-&gt;4)-alpha-linked D-glucose units.. This Struthio camelus (Common ostrich) protein is Pancreatic alpha-amylase.